The sequence spans 525 residues: Nucleolar complex protein 4 homolog (525 aa).

3 helical membrane-spanning segments follow: residues 305–325 (AAYD…FVPI), 356–376 (FFHL…LVAA), and 384–404 (LSLT…CNLI).

This sequence belongs to the CBF/MAK21 family.

The protein localises to the nucleus membrane. It localises to the nucleus. The protein resides in the nucleolus. The protein is Nucleolar complex protein 4 homolog (noc4l) of Danio rerio (Zebrafish).